A 121-amino-acid polypeptide reads, in one-letter code: UPF0738 protein BLi01253/BL05110 (121 aa).

This sequence belongs to the UPF0738 family.

The sequence is that of UPF0738 protein BLi01253/BL05110 from Bacillus licheniformis (strain ATCC 14580 / DSM 13 / JCM 2505 / CCUG 7422 / NBRC 12200 / NCIMB 9375 / NCTC 10341 / NRRL NRS-1264 / Gibson 46).